Consider the following 473-residue polypeptide: H(+)/Cl(-) exchange transporter ClcA (473 aa).

The Cytoplasmic segment spans residues 1–32 (MKTDTSTFLAQQIVRLRRRDQIRRLMQRDKTP). A helical membrane pass occupies residues 33 to 69 (LAILFMAAVVGTLTGLVGVAFEKAVSWVQNMRIGALV). Residues 70–76 (QVADHAF) lie on the Periplasmic side of the membrane. Residues 77–100 (LLWPLAFILSALLAMVGYFLVRKF) form a helical membrane-spanning segment. A Selectivity filter part_1 motif is present at residues 106–110 (GSGIP). Serine 107 is a chloride binding site. Positions 109–116 (IPEIEGAL) form an intramembrane region, helical. The Cytoplasmic segment spans residues 117 to 123 (EELRPVR). 2 consecutive transmembrane segments (helical) span residues 124–141 (WWRV…TLGA) and 148–166 (EGPT…LDVF). A Selectivity filter part_2 motif is present at residues 146–150 (GREGP). Topologically, residues 167–176 (RMRSAEARHT) are cytoplasmic. 2 consecutive intramembrane regions (helical) follow at residues 177–189 (LLAT…LSAA) and 193–201 (PLAGILFII). Residues 202–214 (EEMRPQFRYNLIS) are Cytoplasmic-facing. The chain crosses the membrane as a helical span at residues 215–232 (IKAVFTGVIMSSIVFRIF). Residues 233–252 (NGEAPIIEVGKLSDAPVNTL) are Periplasmic-facing. The helical transmembrane segment at 253 to 281 (WLYLILGIIFGCVGPVFNSLVLRTQDMFQ) threads the bilayer. Topologically, residues 282–287 (RFHGGE) are cytoplasmic. A helical transmembrane segment spans residues 288–309 (IKKWVLMGGAIGGLCGILGLIE). The Periplasmic segment spans residues 310–329 (PEAAGGGFNLIPIAAAGNFS). 2 consecutive transmembrane segments (helical) span residues 330 to 349 (VGLL…LCFS) and 355 to 376 (GIFA…MAAA). The Selectivity filter part_3 signature appears at 355–359 (GIFAP). Isoleucine 356 and phenylalanine 357 together coordinate chloride. Residues 377-386 (VLFPQYHLEA) lie on the Periplasmic side of the membrane. Residues 387–401 (GTFAIAGMGALMAAS) constitute an intramembrane region (helical). Positions 402-404 (VRA) form an intramembrane region, note=Loop between two helices. Residues 405-416 (PLTGIVLVLEMT) constitute an intramembrane region (helical). The segment at residues 417 to 421 (DNYQL) is an intramembrane region (note=Loop between two helices). The chain crosses the membrane as a helical span at residues 422 to 438 (ILPMIITCLGATLLAQF). Residues 439–473 (LGGKPLYSTILARTLAKQDAEQAAKNQNASAGENT) are Cytoplasmic-facing. Chloride is bound at residue tyrosine 445.

This sequence belongs to the chloride channel (TC 2.A.49) family. ClcA subfamily. As to quaternary structure, homodimer.

It localises to the cell inner membrane. It carries out the reaction 2 chloride(in) + H(+)(out) = 2 chloride(out) + H(+)(in). In terms of biological role, proton-coupled chloride transporter. Functions as antiport system and exchanges two chloride ions for 1 proton. Probably acts as an electrical shunt for an outwardly-directed proton pump that is linked to amino acid decarboxylation, as part of the extreme acid resistance (XAR) response. This Salmonella choleraesuis (strain SC-B67) protein is H(+)/Cl(-) exchange transporter ClcA.